Reading from the N-terminus, the 434-residue chain is Putative magnesium transporter MRS2-D (434 aa).

2 disordered regions span residues 126-171 (AASP…DGEA) and 279-311 (EASE…AGGG). Over residues 279–291 (EASELEDHSSRDE) the composition is skewed to basic and acidic residues. A run of 2 helical transmembrane segments spans residues 367 to 387 (GILL…TGVF) and 405 to 425 (FPCA…AALL).

This sequence belongs to the CorA metal ion transporter (MIT) (TC 1.A.35.5) family.

The protein resides in the membrane. Its function is as follows. Putative magnesium transporter. The sequence is that of Putative magnesium transporter MRS2-D (MRS2-D) from Oryza sativa subsp. japonica (Rice).